The chain runs to 237 residues: Putative exosome complex component rrp40 (237 aa).

In terms of domain architecture, S1 motif spans 67–137; the sequence is EDMVIGTIIE…EPEVVCLSQK (71 aa).

It belongs to the RRP40 family. As to quaternary structure, component of the RNA exosome complex.

It localises to the cytoplasm. The protein localises to the nucleus. It is found in the nucleolus. In terms of biological role, non-catalytic component of the RNA exosome complex which has 3'-&gt;5' exoribonuclease activity and participates in a multitude of cellular RNA processing and degradation events. The sequence is that of Putative exosome complex component rrp40 (exosc3) from Dictyostelium discoideum (Social amoeba).